The following is a 511-amino-acid chain: V-type proton ATPase subunit B, brain isoform (511 aa).

R400 is an ATP binding site.

This sequence belongs to the ATPase alpha/beta chains family. V-ATPase is a heteromultimeric enzyme made up of two complexes: the ATP-hydrolytic V1 complex and the proton translocation V0 complex. The V1 complex consists of three catalytic AB heterodimers that form a heterohexamer, three peripheral stalks each consisting of EG heterodimers, one central rotor including subunits D and F, and the regulatory subunits C and H. The proton translocation complex V0 consists of the proton transport subunit a, a ring of proteolipid subunits c9c'', rotary subunit d, subunits e and f, and the accessory subunits ATP6AP1/Ac45 and ATP6AP2/PRR. In terms of tissue distribution, kidney; found in early distal nephron, encompassing thick ascending limbs and distal convoluted tubules and in the alpha-intercalated cells of the cortical collecting ducts (at protein level). Expressed in epididymal clear cells (at protein level). Mainly expressed in the organ of Corti and spiral ganglion neurons, in both the early postnatal cochlea (P2) and the adult cochlea (P30).

Its subcellular location is the apical cell membrane. It is found in the melanosome. The protein resides in the cytoplasm. It localises to the cytoplasmic vesicle. The protein localises to the secretory vesicle. Its subcellular location is the synaptic vesicle membrane. It is found in the clathrin-coated vesicle membrane. Its function is as follows. Non-catalytic subunit of the V1 complex of vacuolar(H+)-ATPase (V-ATPase), a multisubunit enzyme composed of a peripheral complex (V1) that hydrolyzes ATP and a membrane integral complex (V0) that translocates protons. V-ATPase is responsible for acidifying and maintaining the pH of intracellular compartments and in some cell types, is targeted to the plasma membrane, where it is responsible for acidifying the extracellular environment. In renal intercalated cells, can partially compensate the lack of ATP6V1B1 and mediate secretion of protons (H+) into the urine under base-line conditions but not in conditions of acid load. In Mus musculus (Mouse), this protein is V-type proton ATPase subunit B, brain isoform (Atp6v1b2).